A 328-amino-acid chain; its full sequence is Phenylalanine--tRNA ligase alpha subunit (328 aa).

Residue Glu245 coordinates Mg(2+).

The protein belongs to the class-II aminoacyl-tRNA synthetase family. Phe-tRNA synthetase alpha subunit type 1 subfamily. In terms of assembly, tetramer of two alpha and two beta subunits. Mg(2+) serves as cofactor.

It localises to the cytoplasm. It catalyses the reaction tRNA(Phe) + L-phenylalanine + ATP = L-phenylalanyl-tRNA(Phe) + AMP + diphosphate + H(+). The chain is Phenylalanine--tRNA ligase alpha subunit from Helicobacter pylori (strain Shi470).